Reading from the N-terminus, the 137-residue chain is Phosphoinositide-interacting protein (137 aa).

2 helical membrane-spanning segments follow: residues 56 to 76 and 94 to 114; these read IVIM…TCLA and PGFL…VPII.

As to quaternary structure, interacts with TRPV1.

The protein localises to the membrane. In terms of biological role, regulatory subunit of TRPV1, a molecular sensor of noxious heat and capsaicin. Positively regulates TRPV1 channel activity via phosphatidylinositol 4,5-bisphosphate (PIP2). Binds various phosphoinositide, including phosphatidylinositol 4,5-bisphosphate (PIP2), but not phosphatidylinositol (PI). This Homo sapiens (Human) protein is Phosphoinositide-interacting protein (PIRT).